The following is a 235-amino-acid chain: Large ribosomal subunit protein bL25 (235 aa).

Disordered stretches follow at residues 1 to 21 and 210 to 235; these read MADN…PARR and APAA…GAKK. Residues 210 to 222 are compositionally biased toward low complexity; the sequence is APAAGAAPAAGGE. Residues 223-235 are compositionally biased toward basic and acidic residues; the sequence is AAKKAPEAKGAKK.

This sequence belongs to the bacterial ribosomal protein bL25 family. CTC subfamily. Part of the 50S ribosomal subunit; part of the 5S rRNA/L5/L18/L25 subcomplex. Contacts the 5S rRNA. Binds to the 5S rRNA independently of L5 and L18.

In terms of biological role, this is one of the proteins that binds to the 5S RNA in the ribosome where it forms part of the central protuberance. The chain is Large ribosomal subunit protein bL25 from Anaeromyxobacter sp. (strain Fw109-5).